The following is a 446-amino-acid chain: Phosphoglucosamine mutase (446 aa).

Serine 104 serves as the catalytic Phosphoserine intermediate. The Mg(2+) site is built by serine 104, aspartate 241, aspartate 243, and aspartate 245. Serine 104 carries the phosphoserine modification.

The protein belongs to the phosphohexose mutase family. The cofactor is Mg(2+). In terms of processing, activated by phosphorylation.

It carries out the reaction alpha-D-glucosamine 1-phosphate = D-glucosamine 6-phosphate. Its function is as follows. Catalyzes the conversion of glucosamine-6-phosphate to glucosamine-1-phosphate. This Teredinibacter turnerae (strain ATCC 39867 / T7901) protein is Phosphoglucosamine mutase.